The following is a 411-amino-acid chain: Alpha-1-antitrypsin 1-6 (411 aa).

An N-terminal signal peptide occupies residues 1–25 (MTTPFSSHGLLLLVGLCCLLLITKT). 4 N-linked (GlcNAc...) asparagine glycosylation sites follow: Asn50, Asn89, Asn101, and Asn164.

Belongs to the serpin family. As to expression, expressed predominantly in epididymis where it is found in the epithelial cells of the caput, corpus and cauda epididymis.

It localises to the secreted. Inhibitor of serine proteases. The polypeptide is Alpha-1-antitrypsin 1-6 (Mus musculus (Mouse)).